The sequence spans 424 residues: Histidine--tRNA ligase (424 aa).

The protein belongs to the class-II aminoacyl-tRNA synthetase family. Homodimer.

The protein resides in the cytoplasm. The catalysed reaction is tRNA(His) + L-histidine + ATP = L-histidyl-tRNA(His) + AMP + diphosphate + H(+). In Shewanella halifaxensis (strain HAW-EB4), this protein is Histidine--tRNA ligase.